The following is a 373-amino-acid chain: Alanine racemase (373 aa).

K37 functions as the Proton acceptor; specific for D-alanine in the catalytic mechanism. The residue at position 37 (K37) is an N6-(pyridoxal phosphate)lysine. R135 provides a ligand contact to substrate. The Proton acceptor; specific for L-alanine role is filled by Y266. M313 contacts substrate.

It belongs to the alanine racemase family. Pyridoxal 5'-phosphate is required as a cofactor.

It carries out the reaction L-alanine = D-alanine. Its pathway is amino-acid biosynthesis; D-alanine biosynthesis; D-alanine from L-alanine: step 1/1. Functionally, catalyzes the interconversion of L-alanine and D-alanine. This organism is able to use both L- and D-alanine as a nitrogen source. May also prevent D-alanine from interfering with the use of L-alanine. The chain is Alanine racemase (alr) from Methanococcus maripaludis (strain DSM 14266 / JCM 13030 / NBRC 101832 / S2 / LL).